The following is a 598-amino-acid chain: Protein unc-93 homolog B1 (598 aa).

Positions Met-1–Leu-36 are disordered. A run of 5 helical transmembrane segments spans residues Val-64–Met-84, Lys-110–Ile-130, Phe-132–Thr-152, Thr-160–Gly-180, and Ile-223–Leu-243. N-linked (GlcNAc...) asparagine glycosylation is found at Asn-251 and Asn-272. The next 5 membrane-spanning stretches (helical) occupy residues Leu-285–Gly-305, Leu-343–Leu-363, Leu-378–Trp-398, Val-403–Ala-423, and Val-428–Leu-448. A glycan (N-linked (GlcNAc...) asparagine) is linked at Asn-449. The next 2 membrane-spanning stretches (helical) occupy residues Phe-469–Ser-489 and Ala-495–Glu-515. Residues Pro-524–Gln-598 are disordered. The span at Glu-544–Gly-554 shows a compositional bias: acidic residues. Residues Ser-547 and Ser-550 each carry the phosphoserine modification.

It belongs to the unc-93 family. As to quaternary structure, interacts with TLR3, TLR5, TLR7, TLR8, TLR9 and TLR13 (probably via transmembrane domain). In terms of processing, N-glycosylated.

The protein localises to the endoplasmic reticulum membrane. Its subcellular location is the endosome. The protein resides in the lysosome. It localises to the cytoplasmic vesicle. It is found in the phagosome. Its function is as follows. Plays an important role in innate and adaptive immunity by regulating nucleotide-sensing Toll-like receptor (TLR) signaling. Required for the transport of a subset of TLRs (including TLR3, TLR7 and TLR9) from the endoplasmic reticulum to endolysosomes where they can engage pathogen nucleotides and activate signaling cascades. May play a role in autoreactive B-cells removal. This is Protein unc-93 homolog B1 from Mus musculus (Mouse).